We begin with the raw amino-acid sequence, 633 residues long: DNA mismatch repair protein MutL (633 aa).

The protein belongs to the DNA mismatch repair MutL/HexB family.

Functionally, this protein is involved in the repair of mismatches in DNA. It is required for dam-dependent methyl-directed DNA mismatch repair. May act as a 'molecular matchmaker', a protein that promotes the formation of a stable complex between two or more DNA-binding proteins in an ATP-dependent manner without itself being part of a final effector complex. In Macrococcus caseolyticus (strain JCSC5402) (Macrococcoides caseolyticum), this protein is DNA mismatch repair protein MutL.